Consider the following 337-residue polypeptide: B1 bradykinin receptor (337 aa).

Residues methionine 1–glycine 41 are Extracellular-facing. N-linked (GlcNAc...) asparagine glycans are attached at residues asparagine 13 and asparagine 21. Residues phenylalanine 42 to leucine 62 form a helical membrane-spanning segment. Residues leucine 63 to glutamate 83 are Cytoplasmic-facing. The chain crosses the membrane as a helical span at residues isoleucine 84–alanine 104. At glutamate 105–arginine 121 the chain is on the extracellular side. An intrachain disulfide couples cysteine 120 to cysteine 199. A helical membrane pass occupies residues valine 122–serine 142. Topologically, residues glutamine 143–alanine 164 are cytoplasmic. A helical membrane pass occupies residues glutamine 165–leucine 185. Residues arginine 186–asparagine 217 are Extracellular-facing. N-linked (GlcNAc...) asparagine glycosylation is present at asparagine 195. Residues valine 218–serine 238 form a helical membrane-spanning segment. Over leucine 239–leucine 261 the chain is Cytoplasmic. Residues isoleucine 262 to leucine 282 form a helical membrane-spanning segment. Topologically, residues aspartate 283–glutamine 305 are extracellular. Residues leucine 306–glycine 326 traverse the membrane as a helical segment. Residues arginine 327–leucine 337 are Cytoplasmic-facing.

Belongs to the G-protein coupled receptor 1 family. Bradykinin receptor subfamily. BDKRB1 sub-subfamily. Expressed in bladder, lung, duodenum, kidney, uterus, thymus, salivary gland, testis, prostate, macrophages, aorta, spleen and heart.

The protein resides in the cell membrane. In terms of biological role, this is a receptor for bradykinin. Could be a factor in chronic pain and inflammation. In Rattus norvegicus (Rat), this protein is B1 bradykinin receptor (Bdkrb1).